Here is a 148-residue protein sequence, read N- to C-terminus: Azurin (148 aa).

The first 18 residues, 1 to 18 (MRNQLLFALAFIPTIAAA), serve as a signal peptide directing secretion. Residues 19–148 (ASNCEVNVSA…MMRGTVKLVD (130 aa)) enclose the Plastocyanin-like domain. The cysteines at positions 22 and 45 are disulfide-linked. Residues His65, Cys131, His136, and Met140 each contribute to the Cu cation site.

The protein resides in the periplasm. The protein operates within one-carbon metabolism; methylamine degradation. Functionally, probable electron acceptor for methylamine dehydrogenase. In Methylobacillus flagellatus (strain ATCC 51484 / DSM 6875 / VKM B-1610 / KT), this protein is Azurin (azu).